The chain runs to 432 residues: MHWDLNNYYSNNMDGLISKLKLSKTESTKLKELRQIVRERTRDVFKEARAVAADVKKHTLTLEGVRLKLGQTNVRYLSTADQAEVARLIFEMDDDARNDFINLQPRFWTQGSFQYDTLNKPFQPGQEMDIDDGTYMPMTVFESEPRIGHTLLLLLVDTSLKSLEAENDGWRFEEKNTCGRIKIPHEKTHIDVPMYAIPKNQFQTKQTAADSAHILKSESIFESVALNRDSREAYLVESDKVNLALREGAKRWSISDPKIVEDWFNDSCKRIGGHVRSICRFMKAWRDAQWDVGGPSSISLMTAVVNILNREEHNDSDLAGTMKLVAKLLPDEFNRGLESPDDTDTKLLFPAEWDQNVHQKTIVETMKTLYEILVDAENANTREDALHKMNEAFGKRVTNAQLITSIAAAPAFHVSPSREPEPRKINKTMVSG.

110–115 (QGSFQY) is a GTP binding site. Residues aspartate 129 and aspartate 131 each coordinate Mg(2+). Arginine 180 serves as a coordination point for ATP. Aspartate 191 is a binding site for Mg(2+). Serine 255 serves as a coordination point for ATP. Residues lysine 283, serine 297, and aspartate 344 each contribute to the GTP site. Glycine 432 participates in a covalent cross-link: Glycyl cysteine dithioester (Gly-Cys) (interchain with C-13 in Cap2). Glycine 432 is covalently cross-linked (Glycyl cysteine dithioester (Gly-Cys) (interchain with C-493 in Cap2)). Glycine 432 participates in a covalent cross-link: Glycyl cysteine dithioester (Gly-Cys) (interchain with C-513 in Cap2). Glycine 432 participates in a covalent cross-link: Glycyl lysine isopeptide (Gly-Lys) (interchain with K-? in acceptor proteins).

It belongs to the CD-NTase family. A02 subfamily. A Cap2 dimer is bound on either side by a DncV monomer. It depends on Mg(2+) as a cofactor. Post-translationally, in bacteria expressing capV-dncV-cap2-cap3, this protein is conjugated to about 130 cellular proteins by Cap2, most of which are involved in metabolism; more conjugated protein is found in the absence of Cap3. Most conjugation occurs via an isopeptide bond with the epsilon-amine of Lys on the target protein, but Cys-conjugation also occurs, including to Cap2. Conjugation or deconjugation from cellular proteins does not change the DncV activity in vitro, but does so in vivo during infection. (Microbial infection) During phage T4 infection is conjugated to at least 2 T4 proteins (fibritin (wac) and dexA.2).

The enzyme catalyses GTP + ATP = 3',3'-cGAMP + 2 diphosphate. Its activity is regulated as follows. Primed for activation by Cap2 which conjugates it to cellular proteins. cGAMP production is induced in phage T4 infected cells in a manner that requires Cap2 and Cap3, as well as a C-terminal Ala or Gly residue in this protein. In terms of biological role, cyclic nucleotide synthase (second messenger synthase) of a CBASS antivirus system. CBASS (cyclic oligonucleotide-based antiphage signaling system) provides immunity against bacteriophages. The CD-NTase protein (DncV, this protein) synthesizes cyclic nucleotides in response to infection; these serve as specific second messenger signals. The signals activate a diverse range of effectors, leading to bacterial cell death and thus abortive phage infection. A type II-A(GA) CBASS system. Its function is as follows. Catalyzes the synthesis of 3',3'-cyclic GMP-AMP (cGAMP) from GTP and ATP, a second messenger in cell signal transduction. Its product controls the activity of cGAMP-activated phospholipase CapV, a patatin-like lipase that is a direct cGAMP receptor encoded in the dncV operon. Functionally, protects E.coli against phage infection. When capV and dncV are introduced in E.coli MG1655 there is 1000-fold protection against phage P1; protection against other phage (T2, T4, T5, T6 and lambda-vir) requires the 2 subsequent genes (cap2 and cap3). In another paper the capV-dncV-cap2-cap3 operon gives 10(4)-10(5)-fold protection against phages lambda, T2, T4 and T6, about 1000-fold protection against P1 and 10-fold protection against T5. The polypeptide is Cyclic GMP-AMP synthase (Escherichia coli (strain TW11681)).